The following is a 565-amino-acid chain: MDFLLALVLVSSLYLQAAAEFDGRWPRQIVSSIGLCRYGGRIDCCWGWARQSWGQCQPVCQPRCKHGECIGPNKCKCHPGYAGKTCNQDLNECGLKPRPCKHRCMNTYGSYKCYCLNGYMLMPDGSCSSALTCSMANCQYGCDVVKGQIRCQCPSPGLQLAPDGRTCVDVDECATGRASCPRFRQCVNTFGSYICKCHKGFNLMYIGGKYQCHDIDECSLGQYQCSSFARCYNIHGSYKCKCKEGYQGDGLTCVYIPKVMIEPSGPIHVPKGNGTILKGDRGHNNWIPDVGSTWWPPKTPYIPPIITNRPTSKPTTRPTPKPTPIPTPPPPPPLPTELRTPLPPTTPERPTPRLTSIAPAAGTPPGGITVDNRVQTDPQKLRGDVFIPRQPSNDLFEIFEIERGVSADDEAKDDPGILVHSCNFDHGLCGWIREKDNDLHWEPIRDPAGGQYLTVSAAKAPGGKAARLVLPLGRLMHSGDLCLSFRHKVTGLHSGTLQVFVRKHGAHGAALWGRNGGHGWRQTQITLRGADIKSVIFKGEKRRGHTGEIGLDDVSLKKGHCSEER.

The first 19 residues, 1–19 (MDFLLALVLVSSLYLQAAA), serve as a signal peptide directing secretion. Positions 52–87 (SWGQCQPVCQPRCKHGECIGPNKCKCHPGYAGKTCN) constitute an EGF-like 1 domain. Intrachain disulfides connect cysteine 56–cysteine 69, cysteine 60–cysteine 75, cysteine 77–cysteine 86, cysteine 93–cysteine 104, cysteine 100–cysteine 113, and cysteine 115–cysteine 127. The region spanning 89–128 (DLNECGLKPRPCKHRCMNTYGSYKCYCLNGYMLMPDGSCS) is the EGF-like 2; calcium-binding domain. One can recognise an EGF-like 3 domain in the interval 132–168 (TCSMANCQYGCDVVKGQIRCQCPSPGLQLAPDGRTCV). Residues 169 to 213 (DVDECATGRASCPRFRQCVNTFGSYICKCHKGFNLMYIGGKYQCH) form the EGF-like 4; calcium-binding domain. 6 disulfide bridges follow: cysteine 173–cysteine 186, cysteine 180–cysteine 195, cysteine 197–cysteine 212, cysteine 218–cysteine 231, cysteine 225–cysteine 240, and cysteine 242–cysteine 253. Residues 214–254 (DIDECSLGQYQCSSFARCYNIHGSYKCKCKEGYQGDGLTCV) form the EGF-like 5; calcium-binding domain. Residues 301–373 (YIPPIITNRP…PPGGITVDNR (73 aa)) form a disordered region. A compositionally biased stretch (low complexity) spans 304-316 (PIITNRPTSKPTT). Over residues 317 to 349 (RPTPKPTPIPTPPPPPPLPTELRTPLPPTTPER) the composition is skewed to pro residues. The short motif at 382-384 (RGD) is the Integrin interaction element. In terms of domain architecture, MAM spans 420-563 (HSCNFDHGLC…VSLKKGHCSE (144 aa)).

This sequence belongs to the nephronectin family. As to quaternary structure, homodimer and homotrimer.

It localises to the secreted. Its subcellular location is the extracellular space. The protein localises to the extracellular matrix. Its function is as follows. Functional ligand of integrin alpha-8/beta-1 in kidney development. Regulates the expression of GDNF with integrin alpha-8/beta-1 which is essential for kidney development. May also play a role in the development and function of various tissues, regulating cell adhesion, spreading and survival through the binding of several integrins. This is Nephronectin (NPNT) from Pongo abelii (Sumatran orangutan).